We begin with the raw amino-acid sequence, 571 residues long: Putative clathrin assembly protein At2g01600 (571 aa).

Positions 24-161 (RVNSEYADLD…ECFRVLKYDT (138 aa)) constitute an ENTH domain. Disordered stretches follow at residues 325–346 (YRPDDGLTTEDTEPSHEEREML) and 474–571 (PAPN…TGLI). A compositionally biased stretch (basic and acidic residues) spans 337 to 346 (EPSHEEREML). A compositionally biased stretch (low complexity) spans 508–522 (QQTYQHQPQPTYQHQ). Polar residues-rich tracts occupy residues 523–532 (SNPPTNNSNP) and 543–571 (PVSQQPNTSGYGDFSVNQHNNPFRSTGLI).

It localises to the membrane. The protein localises to the clathrin-coated pit. It is found in the golgi apparatus. The protein resides in the cytoplasmic vesicle. Its subcellular location is the clathrin-coated vesicle. This chain is Putative clathrin assembly protein At2g01600, found in Arabidopsis thaliana (Mouse-ear cress).